The following is a 55-amino-acid chain: Cortexin domain containing 2 (55 aa).

A helical transmembrane segment spans residues 16 to 36 (FAIAFVVLLFLFLIVMIFRCA).

It localises to the membrane. This chain is Cortexin domain containing 2, found in Homo sapiens (Human).